The sequence spans 554 residues: Urocanate hydratase (554 aa).

NAD(+) contacts are provided by residues 51–52 (GG), Gln129, 175–177 (GMG), Glu195, 241–242 (NA), 262–266 (QTSAH), 272–273 (YL), and Tyr321. Cys409 is a catalytic residue. Gly491 provides a ligand contact to NAD(+).

This sequence belongs to the urocanase family. Requires NAD(+) as cofactor.

The protein resides in the cytoplasm. The catalysed reaction is 4-imidazolone-5-propanoate = trans-urocanate + H2O. Its pathway is amino-acid degradation; L-histidine degradation into L-glutamate; N-formimidoyl-L-glutamate from L-histidine: step 2/3. In terms of biological role, catalyzes the conversion of urocanate to 4-imidazolone-5-propionate. The polypeptide is Urocanate hydratase (Methylobacterium nodulans (strain LMG 21967 / CNCM I-2342 / ORS 2060)).